The primary structure comprises 300 residues: MILFDYKLLAALAAVVEQGGFERAAQALGLSQSAVSQRIKLLEARVGQPVLVRETPPHPTDLGRRLLNHVQQVRLLEGDLQRWVPNLDEGGAPERLRIALNADSLATWWAAAVGDFCAERRVLLDLVVEDQEVGLKRMRAGEVAGCVCGSARPVAGARSLLLGAMRYRGLASPDFIARHFPRGVEAAALAGVPAIVFGPDDLLQHRFLKDLGVEGGFIHHLCPSSEGFVRLTAGGLGWGLVPERQVQGELARGELVELLPGQVIDVPLYWHYWRNGGELLASLTEHLLARAGDGLVRVSG.

One can recognise an HTH lysR-type domain in the interval 4-60 (FDYKLLAALAAVVEQGGFERAAQALGLSQSAVSQRIKLLEARVGQPVLVRETPPHPT). Positions 21-40 (FERAAQALGLSQSAVSQRIK) form a DNA-binding region, H-T-H motif.

The protein belongs to the LysR transcriptional regulatory family. As to quaternary structure, homodimer.

Controls the transcription of genes involved in arginine and lysine metabolism. The sequence is that of HTH-type transcriptional regulator ArgP from Pseudomonas aeruginosa (strain UCBPP-PA14).